The following is a 91-amino-acid chain: Small ribosomal subunit protein uS19 (91 aa).

Belongs to the universal ribosomal protein uS19 family.

In terms of biological role, protein S19 forms a complex with S13 that binds strongly to the 16S ribosomal RNA. This Opitutus terrae (strain DSM 11246 / JCM 15787 / PB90-1) protein is Small ribosomal subunit protein uS19.